We begin with the raw amino-acid sequence, 63 residues long: uncharacterized protein (63 aa).

This is an uncharacterized protein from Homo sapiens (Human).